A 689-amino-acid polypeptide reads, in one-letter code: DNA ligase (689 aa).

NAD(+)-binding positions include 58–62, 107–108, and Glu138; these read DQEYD and SL. Lys140 serves as the catalytic N6-AMP-lysine intermediate. NAD(+)-binding residues include Arg161, Glu198, Lys314, and Lys338. Cys432, Cys435, Cys448, and Cys453 together coordinate Zn(2+). Residues 611–689 form the BRCT domain; it reads ASSGTLSGKT…QELLEMLHGG (79 aa).

Belongs to the NAD-dependent DNA ligase family. LigA subfamily. Mg(2+) serves as cofactor. Mn(2+) is required as a cofactor.

The catalysed reaction is NAD(+) + (deoxyribonucleotide)n-3'-hydroxyl + 5'-phospho-(deoxyribonucleotide)m = (deoxyribonucleotide)n+m + AMP + beta-nicotinamide D-nucleotide.. Its function is as follows. DNA ligase that catalyzes the formation of phosphodiester linkages between 5'-phosphoryl and 3'-hydroxyl groups in double-stranded DNA using NAD as a coenzyme and as the energy source for the reaction. It is essential for DNA replication and repair of damaged DNA. The chain is DNA ligase from Methylacidiphilum infernorum (isolate V4) (Methylokorus infernorum (strain V4)).